The primary structure comprises 302 residues: Glutaminase (302 aa).

Residues Ser-61, Asn-111, Glu-155, Asn-162, Tyr-186, Tyr-238, and Val-256 each contribute to the substrate site.

It belongs to the glutaminase family. In terms of assembly, homotetramer.

It carries out the reaction L-glutamine + H2O = L-glutamate + NH4(+). This is Glutaminase from Ectopseudomonas mendocina (strain ymp) (Pseudomonas mendocina).